The following is a 455-amino-acid chain: Asparagine--tRNA ligase (455 aa).

It belongs to the class-II aminoacyl-tRNA synthetase family. Homodimer.

The protein localises to the cytoplasm. It catalyses the reaction tRNA(Asn) + L-asparagine + ATP = L-asparaginyl-tRNA(Asn) + AMP + diphosphate + H(+). The chain is Asparagine--tRNA ligase from Lawsonia intracellularis (strain PHE/MN1-00).